A 156-amino-acid polypeptide reads, in one-letter code: Small ribosomal subunit protein uS7 (156 aa).

It belongs to the universal ribosomal protein uS7 family. Part of the 30S ribosomal subunit. Contacts proteins S9 and S11.

One of the primary rRNA binding proteins, it binds directly to 16S rRNA where it nucleates assembly of the head domain of the 30S subunit. Is located at the subunit interface close to the decoding center, probably blocks exit of the E-site tRNA. This is Small ribosomal subunit protein uS7 from Nitratiruptor sp. (strain SB155-2).